The following is a 785-amino-acid chain: Endonuclease MutS2 (785 aa).

335–342 (GPNTGGKT) contributes to the ATP binding site. The Smr domain maps to 710 to 785 (LDLRGERYED…GNGVTIVEFK (76 aa)).

It belongs to the DNA mismatch repair MutS family. MutS2 subfamily. As to quaternary structure, homodimer. Binds to stalled ribosomes, contacting rRNA.

In terms of biological role, endonuclease that is involved in the suppression of homologous recombination and thus may have a key role in the control of bacterial genetic diversity. Its function is as follows. Acts as a ribosome collision sensor, splitting the ribosome into its 2 subunits. Detects stalled/collided 70S ribosomes which it binds and splits by an ATP-hydrolysis driven conformational change. Acts upstream of the ribosome quality control system (RQC), a ribosome-associated complex that mediates the extraction of incompletely synthesized nascent chains from stalled ribosomes and their subsequent degradation. Probably generates substrates for RQC. The chain is Endonuclease MutS2 from Listeria innocua serovar 6a (strain ATCC BAA-680 / CLIP 11262).